The sequence spans 385 residues: uncharacterized protein (385 aa).

Residues aspartate 180, histidine 258, and histidine 275 each contribute to the Zn(2+) site.

The protein belongs to the iron-containing alcohol dehydrogenase family. Requires Zn(2+) as cofactor.

This is an uncharacterized protein from Synechocystis sp. (strain ATCC 27184 / PCC 6803 / Kazusa).